The following is a 338-amino-acid chain: Solute carrier family 35 member G6 (338 aa).

Residues 1 to 25 (MAGSHPYLNPPDSTHPSPPSAPPSL) are disordered. 9 helical membrane-spanning segments follow: residues 40-60 (LLVALLGGGLPAGFVGPLSHM), 67-87 (LPSLELLICRCLFHLPIALLL), 105-125 (YFYALLNVLSIGCAYSAVQVV), 160-180 (CGLLGSILGLIIIVGPGLWTL), 190-210 (ALGYGQAFVGGLALSLGLLVY), 221-241 (TVAFLSGLVGLLGSVPGLFVL), 255-275 (CVGAVGILALVSFTCVSYAVT), 281-301 (LVCAVLHSEVVVALILQYYML), and 310-330 (IVGAGVVLGSIAIITAWNLSC). Positions 49 to 174 (LPAGFVGPLS…SILGLIIIVG (126 aa)) constitute an EamA 1 domain. Residues 272–325 (YAVTKAHPALVCAVLHSEVVVALILQYYMLHETVAPSDIVGAGVVLGSIAIITA) form the EamA 2 domain.

It belongs to the SLC35G solute transporter family. As to expression, expressed in placenta and testis.

Its subcellular location is the membrane. This is Solute carrier family 35 member G6 (SLC35G6) from Homo sapiens (Human).